The sequence spans 1780 residues: Chitin synthase Vb (1780 aa).

Residues asparagine 133, asparagine 153, asparagine 629, asparagine 644, asparagine 655, and asparagine 660 are each glycosylated (N-linked (GlcNAc...) asparagine). A run of 2 helical transmembrane segments spans residues 740–760 (AWIA…LKFI) and 776–796 (FVLF…IIGF). In terms of domain architecture, Cytochrome b5 heme-binding spans 805–866 (NKAWNVKEVA…LSGMVMDNYF (62 aa)). Residues asparagine 888 and asparagine 1009 are each glycosylated (N-linked (GlcNAc...) asparagine). The chain crosses the membrane as a helical span at residues 1046-1066 (LLLAFAIIICIVTAVKFLAAL). A glycan (N-linked (GlcNAc...) asparagine) is linked at asparagine 1411. A run of 3 helical transmembrane segments spans residues 1442 to 1462 (LCGT…IYIL), 1469 to 1489 (IPYI…LIFI), and 1497 to 1517 (IGWM…LPLY). Residue asparagine 1524 is glycosylated (N-linked (GlcNAc...) asparagine). The tract at residues 1649-1691 (TGVHDMRSQSPYQDYPGQHPSVSNLRGQANLSPATGGGHSRSG) is disordered. The segment covering 1668-1681 (PSVSNLRGQANLSP) has biased composition (polar residues). The DEK-C domain occupies 1722–1778 (GPNDMAIVESIRSVLCEVDLDTVTKKQVRALVEQRLQTELVGERRTFMDRQIDHELE).

Belongs to the chitin synthase family. Class VII subfamily.

It is found in the cell membrane. The enzyme catalyses [(1-&gt;4)-N-acetyl-beta-D-glucosaminyl](n) + UDP-N-acetyl-alpha-D-glucosamine = [(1-&gt;4)-N-acetyl-beta-D-glucosaminyl](n+1) + UDP + H(+). In terms of biological role, polymerizes chitin, a structural polymer of the cell wall and septum, by transferring the sugar moiety of UDP-GlcNAc to the non-reducing end of the growing chitin polymer. ChsV and chsVb do perform additive, but not redundant, functions in septum formation. Functions not only in the maintenance of cell wall integrity under different osmotic conditions but also in polarized cell wall synthesis. Plays an important role in the complex infection process of this fungus. The sequence is that of Chitin synthase Vb from Fusarium oxysporum f. sp. lycopersici (strain 4287 / CBS 123668 / FGSC 9935 / NRRL 34936) (Fusarium vascular wilt of tomato).